The chain runs to 78 residues: UPF0349 protein BLi03401/BL03152 (78 aa).

The protein belongs to the UPF0349 family.

In Bacillus licheniformis (strain ATCC 14580 / DSM 13 / JCM 2505 / CCUG 7422 / NBRC 12200 / NCIMB 9375 / NCTC 10341 / NRRL NRS-1264 / Gibson 46), this protein is UPF0349 protein BLi03401/BL03152.